A 556-amino-acid chain; its full sequence is Genetic interactor of prohibitins 3, mitochondrial (556 aa).

The transit peptide at 1–21 directs the protein to the mitochondrion; that stretch reads MLNLCHALRGVRQFSCSVIVK. A CP-type G domain is found at 113 to 305; it reads ESTLNDILNY…LFDLPGYSTS (193 aa).

The protein belongs to the TRAFAC class YlqF/YawG GTPase family. GEP3 subfamily.

It is found in the mitochondrion. In terms of biological role, interacts genetically with prohibitins and thus may be involved in the mitochondrial lipid metabolism. In Saccharomyces cerevisiae (strain ATCC 204508 / S288c) (Baker's yeast), this protein is Genetic interactor of prohibitins 3, mitochondrial (GEP3).